Reading from the N-terminus, the 178-residue chain is ATP synthase subunit delta (178 aa).

Belongs to the ATPase delta chain family. F-type ATPases have 2 components, F(1) - the catalytic core - and F(0) - the membrane proton channel. F(1) has five subunits: alpha(3), beta(3), gamma(1), delta(1), epsilon(1). F(0) has three main subunits: a(1), b(2) and c(10-14). The alpha and beta chains form an alternating ring which encloses part of the gamma chain. F(1) is attached to F(0) by a central stalk formed by the gamma and epsilon chains, while a peripheral stalk is formed by the delta and b chains.

Its subcellular location is the cell membrane. Its function is as follows. F(1)F(0) ATP synthase produces ATP from ADP in the presence of a proton or sodium gradient. F-type ATPases consist of two structural domains, F(1) containing the extramembraneous catalytic core and F(0) containing the membrane proton channel, linked together by a central stalk and a peripheral stalk. During catalysis, ATP synthesis in the catalytic domain of F(1) is coupled via a rotary mechanism of the central stalk subunits to proton translocation. In terms of biological role, this protein is part of the stalk that links CF(0) to CF(1). It either transmits conformational changes from CF(0) to CF(1) or is implicated in proton conduction. The chain is ATP synthase subunit delta from Streptococcus agalactiae serotype Ia (strain ATCC 27591 / A909 / CDC SS700).